Reading from the N-terminus, the 162-residue chain is NADH-quinone oxidoreductase subunit I (162 aa).

2 consecutive 4Fe-4S ferredoxin-type domains span residues 53–83 and 93–122; these read LRRY…IEAE and TRYD…EGPN. Residues Cys-63, Cys-66, Cys-69, Cys-73, Cys-102, Cys-105, Cys-108, and Cys-112 each contribute to the [4Fe-4S] cluster site.

Belongs to the complex I 23 kDa subunit family. As to quaternary structure, NDH-1 is composed of 14 different subunits. Subunits NuoA, H, J, K, L, M, N constitute the membrane sector of the complex. It depends on [4Fe-4S] cluster as a cofactor.

It localises to the cell inner membrane. It carries out the reaction a quinone + NADH + 5 H(+)(in) = a quinol + NAD(+) + 4 H(+)(out). Its function is as follows. NDH-1 shuttles electrons from NADH, via FMN and iron-sulfur (Fe-S) centers, to quinones in the respiratory chain. The immediate electron acceptor for the enzyme in this species is believed to be ubiquinone. Couples the redox reaction to proton translocation (for every two electrons transferred, four hydrogen ions are translocated across the cytoplasmic membrane), and thus conserves the redox energy in a proton gradient. The sequence is that of NADH-quinone oxidoreductase subunit I from Granulibacter bethesdensis (strain ATCC BAA-1260 / CGDNIH1).